A 407-amino-acid polypeptide reads, in one-letter code: Phosphopentomutase (407 aa).

6 residues coordinate Mn(2+): Asp10, Asp307, His312, Asp348, His349, and His360.

The protein belongs to the phosphopentomutase family. Requires Mn(2+) as cofactor.

Its subcellular location is the cytoplasm. The enzyme catalyses 2-deoxy-alpha-D-ribose 1-phosphate = 2-deoxy-D-ribose 5-phosphate. It catalyses the reaction alpha-D-ribose 1-phosphate = D-ribose 5-phosphate. It participates in carbohydrate degradation; 2-deoxy-D-ribose 1-phosphate degradation; D-glyceraldehyde 3-phosphate and acetaldehyde from 2-deoxy-alpha-D-ribose 1-phosphate: step 1/2. In terms of biological role, isomerase that catalyzes the conversion of deoxy-ribose 1-phosphate (dRib-1-P) and ribose 1-phosphate (Rib-1-P) to deoxy-ribose 5-phosphate (dRib-5-P) and ribose 5-phosphate (Rib-5-P), respectively. This is Phosphopentomutase from Methylobacterium nodulans (strain LMG 21967 / CNCM I-2342 / ORS 2060).